The sequence spans 180 residues: MKRSIIAAAVFSSFFMSAGVFAADVDTGTLTIKGNIAESPCKFEAGGDSVSINMPTVPTSVFEGKAKYSTYDDAVGVTSSMLKISCPKEVAGVKLSLITNDKITGNDKAIASSNDTVGYYLYLGDNSDVLDVSAPFNIESYKTAEGQYAIPFKAKYLKLTDNSVQSGDVLSSLVMRVAQD.

The signal sequence occupies residues 1–22; that stretch reads MKRSIIAAAVFSSFFMSAGVFA.

This sequence belongs to the fimbrial protein family.

Part of the yehABCD fimbrial operon. Could contribute to adhesion to various surfaces in specific environmental niches. This is an uncharacterized protein from Escherichia coli (strain K12).